A 590-amino-acid chain; its full sequence is Phosphomethylpyrimidine synthase (590 aa).

Substrate is bound by residues N197, M226, Y255, H291, 311–313 (SRG), 352–355 (DGLR), and E391. Position 395 (H395) interacts with Zn(2+). Y418 contributes to the substrate binding site. Position 459 (H459) interacts with Zn(2+). 3 residues coordinate [4Fe-4S] cluster: C539, C542, and C547.

Belongs to the ThiC family. [4Fe-4S] cluster serves as cofactor.

It catalyses the reaction 5-amino-1-(5-phospho-beta-D-ribosyl)imidazole + S-adenosyl-L-methionine = 4-amino-2-methyl-5-(phosphooxymethyl)pyrimidine + CO + 5'-deoxyadenosine + formate + L-methionine + 3 H(+). Its pathway is cofactor biosynthesis; thiamine diphosphate biosynthesis. In terms of biological role, catalyzes the synthesis of the hydroxymethylpyrimidine phosphate (HMP-P) moiety of thiamine from aminoimidazole ribotide (AIR) in a radical S-adenosyl-L-methionine (SAM)-dependent reaction. The protein is Phosphomethylpyrimidine synthase of Bacillus velezensis (strain DSM 23117 / BGSC 10A6 / LMG 26770 / FZB42) (Bacillus amyloliquefaciens subsp. plantarum).